The chain runs to 262 residues: Translation initiation factor 2 subunit alpha (262 aa).

Residues 15–86 enclose the S1 motif domain; that stretch reads GELVVGTVHK…RKGHVDVSMK (72 aa).

It belongs to the eIF-2-alpha family. In terms of assembly, heterotrimer composed of an alpha, a beta and a gamma chain.

Functionally, eIF-2 functions in the early steps of protein synthesis by forming a ternary complex with GTP and initiator tRNA. This chain is Translation initiation factor 2 subunit alpha (eif2a), found in Methanothermobacter thermautotrophicus (strain ATCC 29096 / DSM 1053 / JCM 10044 / NBRC 100330 / Delta H) (Methanobacterium thermoautotrophicum).